Consider the following 542-residue polypeptide: Katanin p60 ATPase-containing subunit A-like 2 (542 aa).

The LisH domain maps to 25-57 (RRKNLLILIMHYLLQEGYMDSANSLEQETKISL). Disordered regions lie at residues 94–126 (LDHD…RIAQ) and 142–168 (HAHQ…ASEI). Residues 114–126 (GSNSTQGLPRIAQ) are compositionally biased toward polar residues. 298 to 305 (GPPGTGKT) serves as a coordination point for ATP.

It belongs to the AAA ATPase family. Katanin p60 subunit A1 subfamily. A-like 2 sub-subfamily.

Its subcellular location is the cytoplasm. It localises to the cytoskeleton. The protein resides in the spindle. It is found in the spindle pole. The catalysed reaction is n ATP + n H2O + a microtubule = n ADP + n phosphate + (n+1) alpha/beta tubulin heterodimers.. Its function is as follows. Severs microtubules in vitro in an ATP-dependent manner. This activity may promote rapid reorganization of cellular microtubule arrays. The polypeptide is Katanin p60 ATPase-containing subunit A-like 2 (katnal2) (Xenopus tropicalis (Western clawed frog)).